A 97-amino-acid chain; its full sequence is RNA-binding protein Hfq (97 aa).

A Sm domain is found at 10–70; it reads DPFLNALRKE…ISTIVPARSV (61 aa).

Belongs to the Hfq family. Homohexamer.

Its function is as follows. RNA chaperone that binds small regulatory RNA (sRNAs) and mRNAs to facilitate mRNA translational regulation in response to envelope stress, environmental stress and changes in metabolite concentrations. Also binds with high specificity to tRNAs. The chain is RNA-binding protein Hfq from Neisseria gonorrhoeae (strain ATCC 700825 / FA 1090).